The chain runs to 70 residues: Small ribosomal subunit protein bS21 (70 aa).

Belongs to the bacterial ribosomal protein bS21 family.

This chain is Small ribosomal subunit protein bS21, found in Cupriavidus pinatubonensis (strain JMP 134 / LMG 1197) (Cupriavidus necator (strain JMP 134)).